The sequence spans 102 residues: Large ribosomal subunit protein bL21 (102 aa).

Belongs to the bacterial ribosomal protein bL21 family. As to quaternary structure, part of the 50S ribosomal subunit. Contacts protein L20.

This protein binds to 23S rRNA in the presence of protein L20. The polypeptide is Large ribosomal subunit protein bL21 (Leifsonia xyli subsp. xyli (strain CTCB07)).